The following is a 182-amino-acid chain: ATP-dependent protease subunit HslV (182 aa).

The active site involves Thr12. Ala167, Cys170, and Thr173 together coordinate Na(+).

This sequence belongs to the peptidase T1B family. HslV subfamily. In terms of assembly, a double ring-shaped homohexamer of HslV is capped on each side by a ring-shaped HslU homohexamer. The assembly of the HslU/HslV complex is dependent on binding of ATP.

It localises to the cytoplasm. The catalysed reaction is ATP-dependent cleavage of peptide bonds with broad specificity.. Its activity is regulated as follows. Allosterically activated by HslU binding. Protease subunit of a proteasome-like degradation complex believed to be a general protein degrading machinery. The sequence is that of ATP-dependent protease subunit HslV from Chlorobium phaeobacteroides (strain BS1).